Here is a 2166-residue protein sequence, read N- to C-terminus: Protein TIC236, chloroplastic (2166 aa).

A chloroplast-targeting transit peptide spans 1-37; the sequence is MSLRLQNPFLSTPLLHGSFNRREKRINVARRAFRSKR. The Stromal portion of the chain corresponds to 38-101; it reads IYSEKKQNDW…RSLAPVWEEG (64 aa). Residues 102 to 122 traverse the membrane as a helical segment; the sequence is LFFLRCSVFFAVISGVCLLVW. Residues 123–2166 are Chloroplast intermembrane-facing; it reads YGQNKARVFV…LFEYSATSQD (2044 aa). Residues 1611–1649 are disordered; it reads MSEGEVSETDRGGAVKIPSWAKEKEDDEKRTSRDRSEER. A compositionally biased stretch (basic and acidic residues) spans 1631 to 1649; sequence AKEKEDDEKRTSRDRSEER.

The protein belongs to the TamB family. In terms of assembly, part of the TIC complex, which can interact with components of the TOC complex to form a larger import complex. Interacts with the TOC complex component TOC75-3.

It localises to the plastid. Its subcellular location is the chloroplast inner membrane. The protein resides in the chloroplast intermembrane space. Functionally, part of the inner chloroplast membrane translocon complex (TIC) which associates with the outer chloroplast membrane translocon complex (TOC) and forms a supercomplex involved in protein precursor import into the chloroplast stroma. Required for the import of HSP93, TIC40 and RBCS protein precursors in the chloroplast stroma. Links the outer and inner membrane translocons of the chloroplast envelope. The protein is Protein TIC236, chloroplastic of Arabidopsis thaliana (Mouse-ear cress).